The sequence spans 518 residues: Probable lysine--tRNA ligase, cytoplasmic (518 aa).

This sequence belongs to the class-II aminoacyl-tRNA synthetase family. Homodimer.

It localises to the cytoplasm. It catalyses the reaction tRNA(Lys) + L-lysine + ATP = L-lysyl-tRNA(Lys) + AMP + diphosphate. The chain is Probable lysine--tRNA ligase, cytoplasmic from Enterocytozoon bieneusi (strain H348) (Microsporidian parasite).